A 391-amino-acid polypeptide reads, in one-letter code: Succinate--CoA ligase [ADP-forming] subunit beta (391 aa).

Residues 9–245 (KQIFAKYGVP…ISEEDADERE (237 aa)) form the ATP-grasp domain. ATP is bound by residues Lys46, 53 to 55 (GRG), Glu99, Ala102, and Glu107. Residues Asn200 and Asp214 each contribute to the Mg(2+) site. Residues Asn265 and 322–324 (GIV) each bind substrate.

The protein belongs to the succinate/malate CoA ligase beta subunit family. Heterotetramer of two alpha and two beta subunits. Mg(2+) is required as a cofactor.

It catalyses the reaction succinate + ATP + CoA = succinyl-CoA + ADP + phosphate. It carries out the reaction GTP + succinate + CoA = succinyl-CoA + GDP + phosphate. Its pathway is carbohydrate metabolism; tricarboxylic acid cycle; succinate from succinyl-CoA (ligase route): step 1/1. Its function is as follows. Succinyl-CoA synthetase functions in the citric acid cycle (TCA), coupling the hydrolysis of succinyl-CoA to the synthesis of either ATP or GTP and thus represents the only step of substrate-level phosphorylation in the TCA. The beta subunit provides nucleotide specificity of the enzyme and binds the substrate succinate, while the binding sites for coenzyme A and phosphate are found in the alpha subunit. This is Succinate--CoA ligase [ADP-forming] subunit beta from Sulfurimonas denitrificans (strain ATCC 33889 / DSM 1251) (Thiomicrospira denitrificans (strain ATCC 33889 / DSM 1251)).